A 183-amino-acid chain; its full sequence is Large ribosomal subunit protein uL6 (183 aa).

This sequence belongs to the universal ribosomal protein uL6 family. In terms of assembly, part of the 50S ribosomal subunit.

In terms of biological role, this protein binds to the 23S rRNA, and is important in its secondary structure. It is located near the subunit interface in the base of the L7/L12 stalk, and near the tRNA binding site of the peptidyltransferase center. In Chlamydia abortus (strain DSM 27085 / S26/3) (Chlamydophila abortus), this protein is Large ribosomal subunit protein uL6.